A 146-amino-acid chain; its full sequence is D-aminoacyl-tRNA deacylase (146 aa).

The Gly-cisPro motif, important for rejection of L-amino acids signature appears at 137 to 138 (GP).

The protein belongs to the DTD family. In terms of assembly, homodimer.

It is found in the cytoplasm. It catalyses the reaction glycyl-tRNA(Ala) + H2O = tRNA(Ala) + glycine + H(+). The enzyme catalyses a D-aminoacyl-tRNA + H2O = a tRNA + a D-alpha-amino acid + H(+). Its function is as follows. An aminoacyl-tRNA editing enzyme that deacylates mischarged D-aminoacyl-tRNAs. Also deacylates mischarged glycyl-tRNA(Ala), protecting cells against glycine mischarging by AlaRS. Acts via tRNA-based rather than protein-based catalysis; rejects L-amino acids rather than detecting D-amino acids in the active site. By recycling D-aminoacyl-tRNA to D-amino acids and free tRNA molecules, this enzyme counteracts the toxicity associated with the formation of D-aminoacyl-tRNA entities in vivo and helps enforce protein L-homochirality. The protein is D-aminoacyl-tRNA deacylase of Variovorax paradoxus (strain S110).